Here is a 419-residue protein sequence, read N- to C-terminus: UDP-N-acetylglucosamine 1-carboxyvinyltransferase (419 aa).

Position 22–23 (22–23) interacts with phosphoenolpyruvate; that stretch reads KN. Arginine 93 is a UDP-N-acetyl-alpha-D-glucosamine binding site. Cysteine 117 serves as the catalytic Proton donor. Cysteine 117 is subject to 2-(S-cysteinyl)pyruvic acid O-phosphothioketal. The UDP-N-acetyl-alpha-D-glucosamine site is built by aspartate 307 and isoleucine 329.

Belongs to the EPSP synthase family. MurA subfamily.

It localises to the cytoplasm. It catalyses the reaction phosphoenolpyruvate + UDP-N-acetyl-alpha-D-glucosamine = UDP-N-acetyl-3-O-(1-carboxyvinyl)-alpha-D-glucosamine + phosphate. Its pathway is cell wall biogenesis; peptidoglycan biosynthesis. In terms of biological role, cell wall formation. Adds enolpyruvyl to UDP-N-acetylglucosamine. The chain is UDP-N-acetylglucosamine 1-carboxyvinyltransferase from Shewanella baltica (strain OS195).